A 330-amino-acid polypeptide reads, in one-letter code: Ketol-acid reductoisomerase (NADP(+)) (330 aa).

The KARI N-terminal Rossmann domain maps to 1-181; the sequence is MNVYYEQDAD…GGAKAGVIET (181 aa). Residues 24-27, arginine 47, serine 50, serine 52, and 82-85 contribute to the NADP(+) site; these read YGSQ and DQYQ. Histidine 107 is a catalytic residue. Position 133 (glycine 133) interacts with NADP(+). One can recognise a KARI C-terminal knotted domain in the interval 182 to 327; the sequence is TIKDETETDL…AKLRNMMSWL (146 aa). Residues aspartate 190, glutamate 194, glutamate 226, and glutamate 230 each contribute to the Mg(2+) site. Serine 251 contacts substrate.

The protein belongs to the ketol-acid reductoisomerase family. Mg(2+) serves as cofactor.

The enzyme catalyses (2R)-2,3-dihydroxy-3-methylbutanoate + NADP(+) = (2S)-2-acetolactate + NADPH + H(+). It carries out the reaction (2R,3R)-2,3-dihydroxy-3-methylpentanoate + NADP(+) = (S)-2-ethyl-2-hydroxy-3-oxobutanoate + NADPH + H(+). It participates in amino-acid biosynthesis; L-isoleucine biosynthesis; L-isoleucine from 2-oxobutanoate: step 2/4. Its pathway is amino-acid biosynthesis; L-valine biosynthesis; L-valine from pyruvate: step 2/4. Involved in the biosynthesis of branched-chain amino acids (BCAA). Catalyzes an alkyl-migration followed by a ketol-acid reduction of (S)-2-acetolactate (S2AL) to yield (R)-2,3-dihydroxy-isovalerate. In the isomerase reaction, S2AL is rearranged via a Mg-dependent methyl migration to produce 3-hydroxy-3-methyl-2-ketobutyrate (HMKB). In the reductase reaction, this 2-ketoacid undergoes a metal-dependent reduction by NADPH to yield (R)-2,3-dihydroxy-isovalerate. The sequence is that of Ketol-acid reductoisomerase (NADP(+)) from Prosthecochloris aestuarii (strain DSM 271 / SK 413).